The chain runs to 376 residues: Protein RecA (376 aa).

79–86 (GPESSGKT) serves as a coordination point for ATP. The segment at 357–376 (AAARAATDKPVETKGANAAA) is disordered.

The protein belongs to the RecA family.

Its subcellular location is the cytoplasm. In terms of biological role, can catalyze the hydrolysis of ATP in the presence of single-stranded DNA, the ATP-dependent uptake of single-stranded DNA by duplex DNA, and the ATP-dependent hybridization of homologous single-stranded DNAs. It interacts with LexA causing its activation and leading to its autocatalytic cleavage. In Synechococcus sp. (strain CC9902), this protein is Protein RecA.